Consider the following 162-residue polypeptide: MTIDDDLSRIAEQEKVLSFDAFDLTTAWQLGKLLQELATERGLGIAIDVTLHSMPVFYAALPGVTPDNVNWVRRKRNMVLRYFRSSYASGLKLQKDGKTVEDNGLSGADYAPHGGSFPINVKGSGCIGAVTVSGLPQRDDHNLAVEALALMLAKDLDTLRLA.

The protein belongs to the UPF0303 family.

The protein is UPF0303 protein RL3365 of Rhizobium johnstonii (strain DSM 114642 / LMG 32736 / 3841) (Rhizobium leguminosarum bv. viciae).